The sequence spans 556 residues: Oxygen-dependent choline dehydrogenase (556 aa).

An FAD-binding site is contributed by 4–33 (DYIIIGAGSAGNVLATRLTEDPNTSVLLLE). Catalysis depends on His473, which acts as the Proton acceptor.

The protein belongs to the GMC oxidoreductase family. The cofactor is FAD.

The catalysed reaction is choline + A = betaine aldehyde + AH2. It carries out the reaction betaine aldehyde + NAD(+) + H2O = glycine betaine + NADH + 2 H(+). Its pathway is amine and polyamine biosynthesis; betaine biosynthesis via choline pathway; betaine aldehyde from choline (cytochrome c reductase route): step 1/1. Functionally, involved in the biosynthesis of the osmoprotectant glycine betaine. Catalyzes the oxidation of choline to betaine aldehyde and betaine aldehyde to glycine betaine at the same rate. This is Oxygen-dependent choline dehydrogenase from Escherichia coli (strain K12 / DH10B).